A 105-amino-acid polypeptide reads, in one-letter code: uncharacterized protein (105 aa).

A run of 3 helical transmembrane segments spans residues 3 to 23 (ISPL…QALF), 41 to 61 (DLVN…ALVS), and 63 to 83 (AFPV…TFIY).

Its subcellular location is the cell membrane. This is an uncharacterized protein from Methanocaldococcus jannaschii (strain ATCC 43067 / DSM 2661 / JAL-1 / JCM 10045 / NBRC 100440) (Methanococcus jannaschii).